A 218-amino-acid polypeptide reads, in one-letter code: Large ribosomal subunit protein uL1 (218 aa).

This sequence belongs to the universal ribosomal protein uL1 family. As to quaternary structure, part of the 50S ribosomal subunit.

Its function is as follows. Binds directly to 23S rRNA. Probably involved in E site tRNA release. Protein L1 is also a translational repressor protein, it controls the translation of its operon by binding to its mRNA. The polypeptide is Large ribosomal subunit protein uL1 (Metallosphaera sedula (strain ATCC 51363 / DSM 5348 / JCM 9185 / NBRC 15509 / TH2)).